A 471-amino-acid polypeptide reads, in one-letter code: Ubiquitin carboxyl-terminal hydrolase 8 (471 aa).

Residues cysteine 4, histidine 6, cysteine 46, cysteine 49, cysteine 60, cysteine 63, cysteine 68, histidine 73, histidine 77, histidine 83, cysteine 96, and cysteine 99 each coordinate Zn(2+). Residues 22–122 form a UBP-type; degenerate zinc finger; it reads KTCNAARYIL…ILAKYWDDVC (101 aa). Residues 137–468 enclose the USP domain; sequence SGLINMGSTC…QAYLLFYTIR (332 aa). Cysteine 146 serves as the catalytic Nucleophile. Residues histidine 170, cysteine 174, cysteine 182, cysteine 185, histidine 250, cysteine 271, cysteine 273, histidine 276, cysteine 289, cysteine 292, cysteine 336, and cysteine 339 each contribute to the Zn(2+) site. The active-site Proton acceptor is histidine 427.

The protein belongs to the peptidase C19 family. UBP8 subfamily. In terms of assembly, component of the 1.8 MDa SAGA (Spt-Ada-Gcn5 acetyltransferase) complex, which is composed of 19 subunits TRA1, SPT7, TAF5, NGG1/ADA3, SGF73, SPT20/ADA5, SPT8, TAF12, TAF6, HFI1/ADA1, UBP8, GCN5, ADA2, SPT3, SGF29, TAF10, TAF9, SGF11 and SUS1. The SAGA complex is composed of 4 modules, namely the HAT (histone acetyltransferase) module (GCN5, ADA2, NGG1/ADA3 and SGF29), the DUB (deubiquitinating) module (UBP8, SGF11, SGF73 and SUS1), the core or TAF (TBP-associated factor) module (TAF5, TAF6, TAF9, TAF10 and TAF12), and the Tra1 or SPT (Suppressor of Ty) module (TRA1, HFI1/ADA1, SPT3, SPT7, SPT8 and SPT20/ADA5). The Tra1/SPT module binds activators, the core module recruits TBP (TATA-binding protein), the HAT module contains the histone H3 acetyltransferase GCN5, and the DUB module comprises the histone H2B deubiquitinase UBP8. Also identified in an altered form of SAGA, named SALSA (SAGA altered, Spt8 absent) or SLIK (SAGA-like) complex, which contains a C-terminal truncated form of SPT7 and is missing SPT8. However, it has been shown that the SAGA and SAGA-like SALSA/SLIK transcriptional coactivators are structurally and biochemically equivalent.

Its subcellular location is the nucleus. It catalyses the reaction Thiol-dependent hydrolysis of ester, thioester, amide, peptide and isopeptide bonds formed by the C-terminal Gly of ubiquitin (a 76-residue protein attached to proteins as an intracellular targeting signal).. Histone deubiquitinating enzyme component of the transcription coactivator SAGA complex. SAGA acts as a general cofactor required for essentially all RNA polymerase II transcription. At the promoters, SAGA is required for transcription pre-initiation complex (PIC) recruitment. It influences RNA polymerase II transcriptional activity through different activities such as TBP interaction (via core/TAF module) and promoter selectivity, interaction with transcription activators (via Tra1/SPT module), and chromatin modification through histone acetylation (via HAT module) and deubiquitination (via DUB module). SAGA preferentially acetylates histones H3 (to form H3K9ac, H3K14ac, H3K18ac and H3K23ac) and H2B and deubiquitinates histone H2B. SAGA interacts with DNA via upstream activating sequences (UASs). Also identified in a modified version of SAGA named SALSA or SLIK. The cleavage of SPT7 and the absence of the SPT8 subunit in SLIK neither drive any major conformational differences in its structure compared with SAGA, nor significantly affect HAT, DUB, or DNA-binding activities. Within the DUB module, the correctly positioned zinc finger domains of SGF11 and SGF73 are both required to fully activate the ubiquitin hydrolase UBP8. The DUB module is also linked to the splicing efficiency of many transcripts. In Saccharomyces cerevisiae (strain ATCC 204508 / S288c) (Baker's yeast), this protein is Ubiquitin carboxyl-terminal hydrolase 8 (UBP8).